Consider the following 145-residue polypeptide: Ponticulin-like protein B (145 aa).

The N-terminal stretch at 1 to 22 (MLFIKSLLLLLSLIFAVSNATG) is a signal peptide. A glycan (N-linked (GlcNAc...) asparagine) is linked at N34. The interval 107 to 126 (DTTSSSTSPSSTSPSSTSPA) is disordered. Over residues 108–126 (TTSSSTSPSSTSPSSTSPA) the composition is skewed to low complexity. Residue S117 is the site of GPI-like-anchor amidated serine attachment. A propeptide spans 118-145 (TSPSSTSPASTLIGSIAFVTLAALFALI) (removed in mature form).

Belongs to the ponticulin family. Post-translationally, the GPI-like-anchor contains a phosphoceramide group, rather than a phosphatidyl group.

The protein resides in the cell membrane. Functionally, binds F-actin and nucleates actin assembly. This Dictyostelium discoideum (Social amoeba) protein is Ponticulin-like protein B (ponB).